We begin with the raw amino-acid sequence, 488 residues long: Envelope glycoprotein gp62 (488 aa).

Residues 1–20 (MGKFLATLILFFQFCPLILG) form the signal peptide. Over 21 to 442 (DYSPSCCTLT…LGLSQWAREA (422 aa)) the chain is Extracellular. 2 N-linked (GlcNAc...) asparagine; by host glycosylation sites follow: Asn-140 and Asn-222. The CXXC motif lies at 225 to 228 (CIVC). Intrachain disulfides connect Cys-225-Cys-228, Cys-225-Cys-401, and Cys-393-Cys-400. Asn-244 and Asn-272 each carry an N-linked (GlcNAc...) asparagine; by host glycan. Positions 313–333 (AVPVAVWLVSALAMGAGVAGR) are fusion peptide. 2 coiled-coil regions span residues 341 to 387 (ASGK…LLFW) and 397 to 429 (QEQCCFLNITNSHVSILQERPPLENRVLTGWGL). Residues 376-392 (AQNRRGLDLLFWEQGGL) are immunosuppression. A CX6CC motif is present at residues 393-401 (CKALQEQCC). Residue Asn-404 is glycosylated (N-linked (GlcNAc...) asparagine; by host). The helical transmembrane segment at 443–463 (LQTGITLVALLLLVILAGPCI) threads the bilayer. Residue Cys-462 is the site of S-palmitoyl cysteine; by host attachment. Over 464-488 (LRQLRHLPSRVRYPHYSLINPESSL) the chain is Cytoplasmic.

The mature envelope protein (Env) consists of a trimer of SU-TM heterodimers attached by a labile interchain disulfide bond. Specific enzymatic cleavages in vivo yield mature proteins. Envelope glycoproteins are synthesized as an inactive precursor that is N-glycosylated and processed likely by host cell furin or by a furin-like protease in the Golgi to yield the mature SU and TM proteins. The cleavage site between SU and TM requires the minimal sequence [KR]-X-[KR]-R. Post-translationally, the CXXC motif is highly conserved across a broad range of retroviral envelope proteins. It is thought to participate in the formation of a labile disulfide bond possibly with the CX6CC motif present in the transmembrane protein. Isomerization of the intersubunit disulfide bond to an SU intrachain disulfide bond is thought to occur upon receptor recognition in order to allow membrane fusion. In terms of processing, the transmembrane protein is palmitoylated.

It is found in the virion membrane. The protein resides in the host cell membrane. Its function is as follows. The surface protein (SU) attaches the virus to the host cell by binding to its receptor. This interaction triggers the refolding of the transmembrane protein (TM) and is thought to activate its fusogenic potential by unmasking its fusion peptide. Fusion occurs at the host cell plasma membrane. In terms of biological role, the transmembrane protein (TM) acts as a class I viral fusion protein. Under the current model, the protein has at least 3 conformational states: pre-fusion native state, pre-hairpin intermediate state, and post-fusion hairpin state. During viral and target cell membrane fusion, the coiled coil regions (heptad repeats) assume a trimer-of-hairpins structure, positioning the fusion peptide in close proximity to the C-terminal region of the ectodomain. The formation of this structure appears to drive apposition and subsequent fusion of viral and target cell membranes. Membranes fusion leads to delivery of the nucleocapsid into the cytoplasm. This is Envelope glycoprotein gp62 (env) from Homo sapiens (Human).